Here is a 454-residue protein sequence, read N- to C-terminus: Asparagine--tRNA ligase (454 aa).

It belongs to the class-II aminoacyl-tRNA synthetase family. Homodimer.

Its subcellular location is the cytoplasm. It catalyses the reaction tRNA(Asn) + L-asparagine + ATP = L-asparaginyl-tRNA(Asn) + AMP + diphosphate + H(+). The polypeptide is Asparagine--tRNA ligase (Mesoplasma florum (strain ATCC 33453 / NBRC 100688 / NCTC 11704 / L1) (Acholeplasma florum)).